The following is a 215-amino-acid chain: Rod-determining factor A (215 aa).

Its function is as follows. Involved in cell-shape determination. Required for the formation of rods and wild-type-like motility. This is Rod-determining factor A from Haloferax volcanii (strain ATCC 29605 / DSM 3757 / JCM 8879 / NBRC 14742 / NCIMB 2012 / VKM B-1768 / DS2) (Halobacterium volcanii).